The sequence spans 218 residues: Pyridoxine/pyridoxamine 5'-phosphate oxidase (218 aa).

Substrate contacts are provided by residues 12-15 and Arg70; that span reads RLSY. Residues 65–70, 80–81, Lys87, and Gln109 contribute to the FMN site; these read RTVLLR and YT. Substrate contacts are provided by Tyr127, Arg131, and Ser135. FMN contacts are provided by residues 145–146 and Trp191; that span reads QS. A substrate-binding site is contributed by 197–199; sequence RLH. Arg201 contributes to the FMN binding site.

The protein belongs to the pyridoxamine 5'-phosphate oxidase family. Homodimer. The cofactor is FMN.

It catalyses the reaction pyridoxamine 5'-phosphate + O2 + H2O = pyridoxal 5'-phosphate + H2O2 + NH4(+). The enzyme catalyses pyridoxine 5'-phosphate + O2 = pyridoxal 5'-phosphate + H2O2. The protein operates within cofactor metabolism; pyridoxal 5'-phosphate salvage; pyridoxal 5'-phosphate from pyridoxamine 5'-phosphate: step 1/1. Its pathway is cofactor metabolism; pyridoxal 5'-phosphate salvage; pyridoxal 5'-phosphate from pyridoxine 5'-phosphate: step 1/1. In terms of biological role, catalyzes the oxidation of either pyridoxine 5'-phosphate (PNP) or pyridoxamine 5'-phosphate (PMP) into pyridoxal 5'-phosphate (PLP). The polypeptide is Pyridoxine/pyridoxamine 5'-phosphate oxidase (Acinetobacter baumannii (strain SDF)).